We begin with the raw amino-acid sequence, 30 residues long: Mejucin (30 aa).

It localises to the secreted. Bacteriocin that inhibits the growth of several Gram-positive bacteria, especially the food-borne pathogens L.monocytogenes, B.cereus strain ATCC 11778, B.cereus strain ATCC 21366, B.cereus strain ATCC 10876 and B.cereus strain ATCC 14579. Likely to act by disrupting the pathogen membrane resulting in leakage of intracellular constituents. Does not inhibit the growth of Gram-negative bacteria. The polypeptide is Mejucin (Bacillus subtilis).